The sequence spans 280 residues: uncharacterized protein (280 aa).

6 consecutive transmembrane segments (helical) span residues 3–23 (ILIT…GMYI), 52–72 (FGLF…GSIV), 81–101 (INGL…NLQI), 123–143 (NWLV…LILL), 196–216 (FADI…IIIG), and 233–253 (IFAC…LLHI).

It localises to the cell membrane. This is an uncharacterized protein from Rickettsia prowazekii (strain Madrid E).